The chain runs to 329 residues: Formimidoylglutamase (329 aa).

6 residues coordinate Mn(2+): His133, Asp159, His161, Asp163, Asp253, and Asp255.

Belongs to the arginase family. Mn(2+) is required as a cofactor.

It carries out the reaction N-formimidoyl-L-glutamate + H2O = formamide + L-glutamate. It participates in amino-acid degradation; L-histidine degradation into L-glutamate; L-glutamate from N-formimidoyl-L-glutamate (hydrolase route): step 1/1. Its function is as follows. Catalyzes the conversion of N-formimidoyl-L-glutamate to L-glutamate and formamide. The sequence is that of Formimidoylglutamase from Streptococcus gordonii (strain Challis / ATCC 35105 / BCRC 15272 / CH1 / DL1 / V288).